The sequence spans 198 residues: tRNA (pseudouridine(54)-N(1))-methyltransferase (198 aa).

Residues leucine 134 and glycine 155 each contribute to the S-adenosyl-L-methionine site.

This sequence belongs to the methyltransferase superfamily. TrmY family. In terms of assembly, homodimer.

It is found in the cytoplasm. It carries out the reaction pseudouridine(54) in tRNA + S-adenosyl-L-methionine = N(1)-methylpseudouridine(54) in tRNA + S-adenosyl-L-homocysteine + H(+). Its function is as follows. Specifically catalyzes the N1-methylation of pseudouridine at position 54 (Psi54) in tRNAs. The chain is tRNA (pseudouridine(54)-N(1))-methyltransferase from Thermococcus kodakarensis (strain ATCC BAA-918 / JCM 12380 / KOD1) (Pyrococcus kodakaraensis (strain KOD1)).